Consider the following 887-residue polypeptide: Phosphatidylinositol 3-kinase catalytic subunit type 3 (887 aa).

A C2 PI3K-type domain is found at 35–184; sequence YKAVLEDPML…LAKLTKAHRQ (150 aa). The disordered stretch occupies residues 149–170; it reads VEADGSEPTKTPGRTSSTLSED. Residues 156-170 are compositionally biased toward polar residues; it reads PTKTPGRTSSTLSED. Position 163 is a phosphothreonine; by AMPK (threonine 163). A Phosphoserine; by AMPK modification is found at serine 165. Phosphoserine occurs at positions 244, 261, and 282. Residues 283–520 enclose the PIK helical domain; sequence DHDLKPNAAT…PKTHEMYLNV (238 aa). Residues 447 to 467 are disordered; sequence TSPLPSVSSPPPASKTKEVPD. The PI3K/PI4K catalytic domain maps to 605–871; it reads IPETATLFKS…LIDESVHALF (267 aa). The G-loop stretch occupies residues 611-617; that stretch reads LFKSALM. Positions 740–748 are catalytic loop; it reads GVGDRHLDN. Residues 759–780 form an activation loop region; the sequence is HIDFGYILGRDPKPLPPPMKLN.

This sequence belongs to the PI3/PI4-kinase family. As to quaternary structure, component of the PI3K (PI3KC3/PI3K-III/class III phosphatidylinositol 3-kinase) complex the core of which is composed of the catalytic subunit PIK3C3, the regulatory subunit PIK3R4 and BECN1 associating with additional regulatory/auxiliary subunits to form alternative complex forms. Alternative complex forms containing a fourth regulatory subunit in a mutually exclusive manner are: the PI3K complex I (PI3KC3-C1) containing ATG14, and the PI3K complex II (PI3KC3-C2) containing UVRAG. PI3KC3-C1 displays a V-shaped architecture with PIK3R4 serving as a bridge between PIK3C3 and the ATG14:BECN1 subcomplex. Both, PI3KC3-C1 and PI3KC3-C2, can associate with further regulatory subunits such as RUBCN, SH3GLB1/Bif-1 and AMBRA1. PI3KC3-C1 probably associates with PIK3CB. Interacts with RAB7A in the presence of PIK3R4. Interacts with AMBRA1. Interacts with BECN1P1/BECN2. Interacts with SLAMF1. May be a component of a complex composed of RAB5A (in GDP-bound form), DYN2 and PIK3C3. Interacts with NCKAP1L. Interacts with ATG14; this interaction is increased in the absence of TMEM39A. Interacts with STEEP1; the interaction is STING1-dependent and required for trafficking of STING1 from the endoplasmic reticulum. Interacts with YWHAG. Interacts with ARMC3. The cofactor is Mn(2+). Ubiquitinated via 'Lys-29'- and 'Lys-48'-linked ubiquitination by UBE3C, promoting its degradation. Deubiquitination by ZRANB1/TRABID promotes its stabilization, leading to autophagosome maturation. As to expression, ubiquitously expressed, with a highest expression in skeletal muscle.

The protein resides in the midbody. The protein localises to the late endosome. Its subcellular location is the cytoplasmic vesicle. It localises to the autophagosome. It carries out the reaction a 1,2-diacyl-sn-glycero-3-phospho-(1D-myo-inositol) + ATP = a 1,2-diacyl-sn-glycero-3-phospho-(1D-myo-inositol-3-phosphate) + ADP + H(+). Catalytic subunit of the PI3K complex that mediates formation of phosphatidylinositol 3-phosphate; different complex forms are believed to play a role in multiple membrane trafficking pathways: PI3KC3-C1 is involved in initiation of autophagosomes and PI3KC3-C2 in maturation of autophagosomes and endocytosis. As part of PI3KC3-C1, promotes endoplasmic reticulum membrane curvature formation prior to vesicle budding. Involved in regulation of degradative endocytic trafficking and required for the abscission step in cytokinesis, probably in the context of PI3KC3-C2. Involved in the transport of lysosomal enzyme precursors to lysosomes. Required for transport from early to late endosomes. Functionally, (Microbial infection) Kinase activity is required for SARS coronavirus-2/SARS-CoV-2 replication. In Homo sapiens (Human), this protein is Phosphatidylinositol 3-kinase catalytic subunit type 3.